The chain runs to 885 residues: Lon protease homolog 2, peroxisomal (885 aa).

In terms of domain architecture, Lon N-terminal spans 12–256; sequence LAVLPFRNKV…KATELVDRHL (245 aa). Residues 70 to 104 form a disordered region; the sequence is LLSPGVGSDSGEGGSKVGGSAVESSKQDTKNGKEP. Positions 77–86 are enriched in gly residues; the sequence is SDSGEGGSKV. A compositionally biased stretch (basic and acidic residues) spans 94-104; it reads SKQDTKNGKEP. Residue 409–416 participates in ATP binding; the sequence is GPPGVGKT. One can recognise a Lon proteolytic domain in the interval 690–875; the sequence is VASPGVSVGL…EEVLDHAFEG (186 aa). Active-site residues include Ser781 and Lys824. Positions 883 to 885 match the Microbody targeting signal motif; sequence SKL.

This sequence belongs to the peptidase S16 family.

The protein resides in the peroxisome matrix. It carries out the reaction Hydrolysis of proteins in presence of ATP.. Its function is as follows. ATP-dependent serine protease that mediates the selective degradation of misfolded and unassembled polypeptides in the peroxisomal matrix. Necessary for type 2 peroxisome targeting signal (PTS2)-containing protein processing and facilitates peroxisome matrix protein import. This chain is Lon protease homolog 2, peroxisomal (LON1), found in Zea mays (Maize).